A 508-amino-acid polypeptide reads, in one-letter code: ATP synthase subunit alpha, chloroplastic (508 aa).

Residue 172-179 (GDRQTGKT) coordinates ATP.

Belongs to the ATPase alpha/beta chains family. In terms of assembly, F-type ATPases have 2 components, CF(1) - the catalytic core - and CF(0) - the membrane proton channel. CF(1) has five subunits: alpha(3), beta(3), gamma(1), delta(1), epsilon(1). CF(0) has four main subunits: a, b, b' and c.

It localises to the plastid. It is found in the chloroplast thylakoid membrane. The enzyme catalyses ATP + H2O + 4 H(+)(in) = ADP + phosphate + 5 H(+)(out). Functionally, produces ATP from ADP in the presence of a proton gradient across the membrane. The alpha chain is a regulatory subunit. This is ATP synthase subunit alpha, chloroplastic from Angiopteris evecta (Mule's foot fern).